The chain runs to 285 residues: Hydroxyethylthiazole kinase (285 aa).

Met43 serves as a coordination point for substrate. 2 residues coordinate ATP: Lys119 and Ser172. Residue Gly199 participates in substrate binding.

This sequence belongs to the Thz kinase family. The cofactor is Mg(2+).

The enzyme catalyses 5-(2-hydroxyethyl)-4-methylthiazole + ATP = 4-methyl-5-(2-phosphooxyethyl)-thiazole + ADP + H(+). The protein operates within cofactor biosynthesis; thiamine diphosphate biosynthesis; 4-methyl-5-(2-phosphoethyl)-thiazole from 5-(2-hydroxyethyl)-4-methylthiazole: step 1/1. Functionally, catalyzes the phosphorylation of the hydroxyl group of 4-methyl-5-beta-hydroxyethylthiazole (THZ). This is Hydroxyethylthiazole kinase from Desulfovibrio desulfuricans (strain ATCC 27774 / DSM 6949 / MB).